A 679-amino-acid polypeptide reads, in one-letter code: DNA ligase (679 aa).

NAD(+) is bound by residues 32 to 36 (DTLYD), 81 to 82 (SL), and glutamate 115. Lysine 117 functions as the N6-AMP-lysine intermediate in the catalytic mechanism. Arginine 138, glutamate 175, lysine 293, and lysine 317 together coordinate NAD(+). Zn(2+) is bound by residues cysteine 411, cysteine 414, cysteine 429, and cysteine 434. The region spanning 601-679 (NSSGALLGKT…EAELQKLLST (79 aa)) is the BRCT domain.

The protein belongs to the NAD-dependent DNA ligase family. LigA subfamily. It depends on Mg(2+) as a cofactor. Mn(2+) is required as a cofactor.

It catalyses the reaction NAD(+) + (deoxyribonucleotide)n-3'-hydroxyl + 5'-phospho-(deoxyribonucleotide)m = (deoxyribonucleotide)n+m + AMP + beta-nicotinamide D-nucleotide.. DNA ligase that catalyzes the formation of phosphodiester linkages between 5'-phosphoryl and 3'-hydroxyl groups in double-stranded DNA using NAD as a coenzyme and as the energy source for the reaction. It is essential for DNA replication and repair of damaged DNA. This chain is DNA ligase, found in Parasynechococcus marenigrum (strain WH8102).